A 127-amino-acid polypeptide reads, in one-letter code: Large ribosomal subunit protein bL17 (127 aa).

The protein belongs to the bacterial ribosomal protein bL17 family. In terms of assembly, part of the 50S ribosomal subunit. Contacts protein L32.

The chain is Large ribosomal subunit protein bL17 from Enterococcus faecalis (strain ATCC 700802 / V583).